A 499-amino-acid chain; its full sequence is Glucose-6-phosphate isomerase (499 aa).

Glu352 (proton donor) is an active-site residue. Active-site residues include His383 and Lys487.

The protein belongs to the GPI family.

It localises to the cytoplasm. It catalyses the reaction alpha-D-glucose 6-phosphate = beta-D-fructose 6-phosphate. Its pathway is carbohydrate biosynthesis; gluconeogenesis. It participates in carbohydrate degradation; glycolysis; D-glyceraldehyde 3-phosphate and glycerone phosphate from D-glucose: step 2/4. In terms of biological role, catalyzes the reversible isomerization of glucose-6-phosphate to fructose-6-phosphate. The protein is Glucose-6-phosphate isomerase of Legionella pneumophila (strain Lens).